The sequence spans 71 residues: Large ribosomal subunit protein uL29 (71 aa).

Belongs to the universal ribosomal protein uL29 family.

This Halobacterium salinarum (strain ATCC 700922 / JCM 11081 / NRC-1) (Halobacterium halobium) protein is Large ribosomal subunit protein uL29 (rpl29).